Reading from the N-terminus, the 129-residue chain is Large ribosomal subunit protein bL17 (129 aa).

Belongs to the bacterial ribosomal protein bL17 family. In terms of assembly, part of the 50S ribosomal subunit. Contacts protein L32.

The protein is Large ribosomal subunit protein bL17 of Pasteurella multocida (strain Pm70).